Here is a 305-residue protein sequence, read N- to C-terminus: Nucleotide-binding protein Mpe_A3336 (305 aa).

22 to 29 (GISGSGKS) contacts ATP. 74–77 (DVRS) provides a ligand contact to GTP.

It belongs to the RapZ-like family.

Its function is as follows. Displays ATPase and GTPase activities. The sequence is that of Nucleotide-binding protein Mpe_A3336 from Methylibium petroleiphilum (strain ATCC BAA-1232 / LMG 22953 / PM1).